The sequence spans 303 residues: Uridine diphosphate glucose pyrophosphatase NUDT22 (303 aa).

Residues F56, Y87, R139, A144, D151, H156, and E158 each coordinate substrate. The region spanning 118-285 (ADPLGVGAAL…KGAIILYNRV (168 aa)) is the Nudix hydrolase domain. Positions 148–168 (GLVDVPGGHPEPQALCPGGSP) are disordered. The Nudix box motif lies at 175–196 (GQLVVHELFSSVLQEICDEVNL). 2 residues coordinate Mg(2+): E189 and E193. S274 contacts substrate.

Belongs to the Nudix hydrolase family. Mg(2+) serves as cofactor.

The enzyme catalyses UDP-sugar + H2O = UMP + alpha-D-aldose 1-phosphate.. Functionally, hydrolyzes UDP-glucose to glucose 1-phosphate and UMP and UDP-galactose to galactose 1-phosphate and UMP. Preferred substrate is UDP-glucose. The polypeptide is Uridine diphosphate glucose pyrophosphatase NUDT22 (NUDT22) (Homo sapiens (Human)).